A 522-amino-acid polypeptide reads, in one-letter code: AAA ATPase forming ring-shaped complexes (522 aa).

Residues 1 to 26 (MGQEKHTDAASQSRDPEAVAAHENDQ) are disordered. Positions 20–57 (AAHENDQLRQRNHALAKALTRATEELRKAKAQLEQFMA) form a coiled coil. ATP is bound at residue 248 to 253 (GNGKTL).

This sequence belongs to the AAA ATPase family. In terms of assembly, homohexamer. Assembles into a hexameric ring structure.

This chain is AAA ATPase forming ring-shaped complexes, found in Bifidobacterium animalis subsp. lactis (strain AD011).